A 436-amino-acid polypeptide reads, in one-letter code: Methylenetetrahydrofolate--tRNA-(uracil-5-)-methyltransferase TrmFO (436 aa).

10 to 15 (GAGLAG) contacts FAD.

The protein belongs to the MnmG family. TrmFO subfamily. FAD serves as cofactor.

It localises to the cytoplasm. The enzyme catalyses uridine(54) in tRNA + (6R)-5,10-methylene-5,6,7,8-tetrahydrofolate + NADH + H(+) = 5-methyluridine(54) in tRNA + (6S)-5,6,7,8-tetrahydrofolate + NAD(+). It catalyses the reaction uridine(54) in tRNA + (6R)-5,10-methylene-5,6,7,8-tetrahydrofolate + NADPH + H(+) = 5-methyluridine(54) in tRNA + (6S)-5,6,7,8-tetrahydrofolate + NADP(+). In terms of biological role, catalyzes the folate-dependent formation of 5-methyl-uridine at position 54 (M-5-U54) in all tRNAs. This Staphylococcus carnosus (strain TM300) protein is Methylenetetrahydrofolate--tRNA-(uracil-5-)-methyltransferase TrmFO.